Here is a 381-residue protein sequence, read N- to C-terminus: Flap endonuclease 1 (381 aa).

An N-domain region spans residues 1 to 105; it reads MGIKNLATLI…YELDKRKVRR (105 aa). D34 is a binding site for Mg(2+). Residues R47 and R71 each contribute to the DNA site. Residues D87, E156, E158, D177, and D179 each coordinate Mg(2+). Positions 120–251 are I-domain; that stretch reads EIIKHERRLV…VNALKLIKEH (132 aa). E156 lines the DNA pocket. Residues G229 and D231 each contribute to the DNA site. A Mg(2+)-binding site is contributed by D231. The tract at residues 339–347 is interaction with PCNA; sequence VQKRLDSFF. The interval 360–381 is disordered; that stretch reads AAKKAKDAKKKAAAKGKIAKRR. A compositionally biased stretch (basic residues) spans 365 to 381; the sequence is KDAKKKAAAKGKIAKRR.

Belongs to the XPG/RAD2 endonuclease family. FEN1 subfamily. As to quaternary structure, interacts with PCNA. Three molecules of FEN1 bind to one PCNA trimer with each molecule binding to one PCNA monomer. PCNA stimulates the nuclease activity without altering cleavage specificity. It depends on Mg(2+) as a cofactor. Phosphorylated. Phosphorylation upon DNA damage induces relocalization to the nuclear plasma.

The protein localises to the nucleus. Its subcellular location is the nucleolus. The protein resides in the nucleoplasm. It localises to the mitochondrion. Its function is as follows. Structure-specific nuclease with 5'-flap endonuclease and 5'-3' exonuclease activities involved in DNA replication and repair. During DNA replication, cleaves the 5'-overhanging flap structure that is generated by displacement synthesis when DNA polymerase encounters the 5'-end of a downstream Okazaki fragment. It enters the flap from the 5'-end and then tracks to cleave the flap base, leaving a nick for ligation. Also involved in the long patch base excision repair (LP-BER) pathway, by cleaving within the apurinic/apyrimidinic (AP) site-terminated flap. Acts as a genome stabilization factor that prevents flaps from equilibrating into structures that lead to duplications and deletions. Also possesses 5'-3' exonuclease activity on nicked or gapped double-stranded DNA, and exhibits RNase H activity. Also involved in replication and repair of rDNA and in repairing mitochondrial DNA. The sequence is that of Flap endonuclease 1 from Kluyveromyces lactis (strain ATCC 8585 / CBS 2359 / DSM 70799 / NBRC 1267 / NRRL Y-1140 / WM37) (Yeast).